A 178-amino-acid chain; its full sequence is Crossover junction endodeoxyribonuclease RuvC (178 aa).

Catalysis depends on residues Asp11, Glu71, and Asp143. Residues Asp11, Glu71, and Asp143 each contribute to the Mg(2+) site.

It belongs to the RuvC family. In terms of assembly, homodimer which binds Holliday junction (HJ) DNA. The HJ becomes 2-fold symmetrical on binding to RuvC with unstacked arms; it has a different conformation from HJ DNA in complex with RuvA. In the full resolvosome a probable DNA-RuvA(4)-RuvB(12)-RuvC(2) complex forms which resolves the HJ. Mg(2+) is required as a cofactor.

Its subcellular location is the cytoplasm. The enzyme catalyses Endonucleolytic cleavage at a junction such as a reciprocal single-stranded crossover between two homologous DNA duplexes (Holliday junction).. Its function is as follows. The RuvA-RuvB-RuvC complex processes Holliday junction (HJ) DNA during genetic recombination and DNA repair. Endonuclease that resolves HJ intermediates. Cleaves cruciform DNA by making single-stranded nicks across the HJ at symmetrical positions within the homologous arms, yielding a 5'-phosphate and a 3'-hydroxyl group; requires a central core of homology in the junction. The consensus cleavage sequence is 5'-(A/T)TT(C/G)-3'. Cleavage occurs on the 3'-side of the TT dinucleotide at the point of strand exchange. HJ branch migration catalyzed by RuvA-RuvB allows RuvC to scan DNA until it finds its consensus sequence, where it cleaves and resolves the cruciform DNA. The sequence is that of Crossover junction endodeoxyribonuclease RuvC from Neisseria meningitidis serogroup B (strain ATCC BAA-335 / MC58).